Consider the following 336-residue polypeptide: Aldehyde reductase AdhA (336 aa).

Zn(2+) is bound by residues cysteine 36, cysteine 39, histidine 61, cysteine 92, cysteine 95, cysteine 98, cysteine 106, and cysteine 148.

The protein belongs to the zinc-containing alcohol dehydrogenase family. As to quaternary structure, homotetramer. It depends on Zn(2+) as a cofactor.

It localises to the cytoplasm. The catalysed reaction is a primary alcohol + NADP(+) = an aldehyde + NADPH + H(+). Active on a wide variety of primary alcohols and their corresponding aldehydes, but not against ketones nor secondary alcohols. Active on aliphatic compounds up to 5 carbons in length and aromatic alcohols, less effective on branched-chain primary alcohols. Prefers NADPH to NADH. Its catalytic efficiency is greatest for aldehydes, suggesting the reduction of aromatic and medium-chain aliphatic aldehydes is its in vivo activity. Plays a role in tolerance to internally produced ethanol. The sequence is that of Aldehyde reductase AdhA from Synechocystis sp. (strain ATCC 27184 / PCC 6803 / Kazusa).